Reading from the N-terminus, the 561-residue chain is Centromere protein T (561 aa).

Residues 1–83 are disordered; the sequence is MADHNPDSDS…HIQASGHLEE (83 aa). A compositionally biased stretch (basic and acidic residues) spans 18 to 27; sequence RVLDTADPRT. The segment covering 34 to 46 has biased composition (low complexity); sequence ARAGARRALLETA. Phosphoserine is present on Ser-47. A Phosphothreonine modification is found at Thr-85. Residues 93 to 421 form a flexible stalk domain region; sequence ILLTAPESSI…RHHQFLEPAP (329 aa). 2 disordered regions span residues 256–292 and 333–457; these read HSLPCTPHTGAEDAEQAAGRKTQSSGPGLQKNSPGKP and AEKK…DPHK. The segment covering 276-288 has biased composition (polar residues); it reads KTQSSGPGLQKNS. Ser-343, Ser-345, and Ser-356 each carry phosphoserine. The segment covering 357 to 367 has biased composition (basic and acidic residues); it reads RVEEAEGHTEV. Residues Ser-373, Ser-385, Ser-386, and Ser-397 each carry the phosphoserine modification. Over residues 395–407 the composition is skewed to low complexity; the sequence is AASPESASSTPES.

It belongs to the CENP-T/CNN1 family. As to quaternary structure, component of the CENPA-CAD complex, composed of CENPI, CENPK, CENPL, CENPO, CENPP, CENPQ, CENPR and CENPS. The CENPA-CAD complex is probably recruited on centromeres by the CENPA-NAC complex, at least composed of CENPA, CENPC, CENPH, CENPM, CENPN, CENPT and CENPU. Identified in a centromeric complex containing histones H2A, H2B, H3 and H4, and at least CENPA, CENPB, CENPC, CENPT, CENPN, HJURP, SUPT16H, SSRP1 and RSF1. Interacts (via N-terminus) with the NDC80 complex. Heterodimer with CENPW; this dimer coassembles with CENPS-CENPX heterodimers at centromeres to form the tetrameric CENP-T-W-S-X complex. In terms of processing, dynamically phosphorylated at Ser-47 and probably also other sites during the cell cycle. Phosphorylated at Ser-47 during G2 phase, metaphase and anaphase, but not during telophase or G1 phase.

Its subcellular location is the nucleus. The protein localises to the chromosome. The protein resides in the centromere. It is found in the kinetochore. Functionally, component of the CENPA-NAC (nucleosome-associated) complex, a complex that plays a central role in assembly of kinetochore proteins, mitotic progression and chromosome segregation. The CENPA-NAC complex recruits the CENPA-CAD (nucleosome distal) complex and may be involved in incorporation of newly synthesized CENPA into centromeres. Part of a nucleosome-associated complex that binds specifically to histone H3-containing nucleosomes at the centromere, as opposed to nucleosomes containing CENPA. Component of the heterotetrameric CENP-T-W-S-X complex that binds and supercoils DNA, and plays an important role in kinetochore assembly. CENPT has a fundamental role in kinetochore assembly and function. It is one of the inner kinetochore proteins, with most further proteins binding downstream. Required for normal chromosome organization and normal progress through mitosis. The chain is Centromere protein T (CENPT) from Homo sapiens (Human).